The primary structure comprises 709 residues: MKRNTLLALVLVILIFPTLSTAYIEFTTSINQAIPDSLVYATSAYYDGKIFLIGGENLYSTPVNSVYVYENGSWYLGPSLPFSLSSAGATVCNNTLYVVGGANSTSIFGGILEFIGNGWKVITNSMPIPVYGAIVFSYDYKIYVIGGMNYSGNSLVPPVNYIQVYNLKTNSWQIIGNAPLRLAYSAYYFNGSALFVVGGFTQSATLTSSVFVYYPENNTWISLPSLPGVEAGGVLGYYNGYMYLVGGLYYVSGAYQLGEILYYYNGTWRNTNIQEQIPTQFSTSVQIGNKLIILGGFGPGNIPSNAMQTVSIYLPPPKPQIASIASGNETITVKWYDTNASGYYITYWSNFSQKVTINVGNVTSYTIKHLKDGVTYYIQIVPYNSLGNGTPSDIISATPSSVPNPPIIKVKIGNLNATLTWYDTFNGGYPIEGYYLYVNGKGINVGNITSYVLTNLTAGELYTIELIAYNKIGNSSISSVSFIAASKANLTVTVYKKINGFLVSWNSTSKAKYILTVSKENVVLLNVSTTNTSYFVKVPFGVYNISLEAVNIVGITKYAFILIYYIQPASPTVNWSITLNTVSLNWSKVSGAEYYLIYDNGKLITNTTNTAFTFNLTIGQNEIEVYAANAYYKSAPYIINDVRNYIVVVNSTAISISVPQIKVVSGENTDAPLQTNNIDLKSAIIVITVFVIALLMILVILRERSDNYW.

Residues 1 to 22 (MKRNTLLALVLVILIFPTLSTA) form the signal peptide. Kelch repeat units follow at residues 49-94 (KIFL…VCNN), 96-140 (LYVV…SYDY), 141-192 (KIYV…FNGS), 193-240 (ALFV…YYNG), 242-288 (MYLV…VQIG), and 290-340 (KLII…DTNA). Fibronectin type-III domains follow at residues 315 to 405 (PPPK…VPNP), 406 to 488 (PIIK…ASKA), 489 to 566 (NLTV…IYYI), and 568 to 643 (PASP…NDVR).

The chain is Kelch domain-containing protein STK_09390 from Sulfurisphaera tokodaii (strain DSM 16993 / JCM 10545 / NBRC 100140 / 7) (Sulfolobus tokodaii).